We begin with the raw amino-acid sequence, 73 residues long: MKKNIHPQYNVISASCSCGNVIHVRSTLKHNINLDVCDACHPFYTGTQRIIDTRGRVNLFNKRFNKNNKNPFI.

Residues Cys-16, Cys-18, Cys-37, and Cys-40 each coordinate Zn(2+).

The protein belongs to the bacterial ribosomal protein bL31 family. Type A subfamily. As to quaternary structure, part of the 50S ribosomal subunit. Zn(2+) serves as cofactor.

Functionally, binds the 23S rRNA. The polypeptide is Large ribosomal subunit protein bL31 (Blochmanniella floridana).